Here is a 585-residue protein sequence, read N- to C-terminus: tRNA 5-methylaminomethyl-2-thiouridine biosynthesis bifunctional protein MnmC (585 aa).

The segment at methionine 1 to proline 236 is tRNA (mnm(5)s(2)U34)-methyltransferase. The tract at residues leucine 254–glycine 585 is FAD-dependent cmnm(5)s(2)U34 oxidoreductase. The interval glutamate 564–glycine 585 is disordered.

The protein in the N-terminal section; belongs to the methyltransferase superfamily. tRNA (mnm(5)s(2)U34)-methyltransferase family. It in the C-terminal section; belongs to the DAO family. Requires FAD as cofactor.

The protein resides in the cytoplasm. It carries out the reaction 5-aminomethyl-2-thiouridine(34) in tRNA + S-adenosyl-L-methionine = 5-methylaminomethyl-2-thiouridine(34) in tRNA + S-adenosyl-L-homocysteine + H(+). Catalyzes the last two steps in the biosynthesis of 5-methylaminomethyl-2-thiouridine (mnm(5)s(2)U) at the wobble position (U34) in tRNA. Catalyzes the FAD-dependent demodification of cmnm(5)s(2)U34 to nm(5)s(2)U34, followed by the transfer of a methyl group from S-adenosyl-L-methionine to nm(5)s(2)U34, to form mnm(5)s(2)U34. The chain is tRNA 5-methylaminomethyl-2-thiouridine biosynthesis bifunctional protein MnmC from Maricaulis maris (strain MCS10) (Caulobacter maris).